Reading from the N-terminus, the 615-residue chain is Protein ENHANCED DISEASE RESISTANCE 4 (615 aa).

Disordered regions lie at residues 46 to 271 (IAPS…DDDE), 292 to 336 (YKEQ…GRQG), and 549 to 592 (THDI…RGSP). Composition is skewed to polar residues over residues 63-89 (NEPQSVPETNNVSSSSGQDTVLPSSPG) and 119-129 (GDGTNEIQEQE). Residues 104–129 (MESTEKELDDLELSNGDGTNEIQEQE) adopt a coiled-coil conformation. Basic and acidic residues predominate over residues 134–148 (DSEKNEREDNSRLES). Residues 159–168 (GSGSSSGSLS) are compositionally biased toward low complexity. Polar residues-rich tracts occupy residues 296–314 (GASSSSPFSENRRNGITTY) and 552–564 (INANRNSNSTSES). Positions 565–577 (PIDKAPSKPEKLR) are enriched in basic and acidic residues.

In terms of assembly, interacts with RLK902. Binds and recruits EDR1 at the powdery mildew (e.g. G.cichoracearum) penetration site on the plasma membrane. Interacts with CHC2. Expressed in stems and rosette leaves, and weakly in inflorescences. Not detected in roots.

It is found in the cell membrane. The protein resides in the endosome. In terms of biological role, plays a negative role in salicylic acid (SA)-mediated resistance to powdery mildew (e.g. Golovinomyces cichoracearum). May modulate plant immunity by regulating the relocation of EDR1 by interacting with CHC2 and modulating endocytosis. This Arabidopsis thaliana (Mouse-ear cress) protein is Protein ENHANCED DISEASE RESISTANCE 4.